A 660-amino-acid chain; its full sequence is MQENLRFASSGDDVKIWDASFLTLVDKFNPHTSPHGISSICWSSNNNFLVTASSSGDKIVVSSCKCKPVPLLELAEGQKQTCVDLNSTSMYLASGGLNNTVNIWDLKSKRLHRSLKDHKCEVTCVAYNWNDCYIASGSLSGEIILHSVTTNTSSTPFGHGSKQPIRHIKYSLFRKSLLGSVSDNGVVTLWDVNSQSSYHTFDSTHKAPASGICFSPVNELLFVTIGLDKRIILYDTSSKKLVKTLVADTPLTAVDFMPDGATLAIGSSRGKIYQYDLRMLKSPVKTISAHKTSVQCIAFQYSTSLTKASLSKGSSNKATAVNKRSVPVSSSSGAAQNSGIVREAPSPSIATVLPQPVTTALGKGSGAAQDEAGLARSKSTDIFSKETDAGKSQDFSSFDDTGKNSLGDMFSPIRDDAVVSKGGDESIGKGDGLDFLPQLNSVFPLRKNAGASSSLVLHSSPLNVLMGSSGKEENESHEPSAESKRAYLGKQEPKDAMKQFTKLISSGAEPGILNTCPSSNQARNLEKFEKPEKDIEAQLIHEPSVNGSSTTVPKAASSVTAGVASSLSEKIVDTLGNSRPGAPLTSVQIRFIQNMIQETLDDFREACHRDIVNLQVEMIKQFHIQLNEMHSLLERYSVNEGLVAEIERLREENKRLRAHF.

WD repeat units follow at residues 1–31 (MQEN…FNPH), 32–71 (TSPH…PVPL), 75–114 (AEGQ…LHRS), 117–156 (DHKC…SSTP), 160–200 (GSKQ…SYHT), 204–244 (THKA…LVKT), 246–285 (VADT…SPVK), and 289–332 (AHKT…SSSS). Residues Ser-325 and Ser-379 each carry the phosphoserine modification. Ser-397 is modified (phosphoserine; by PLK1). Ser-411 is modified (phosphoserine). Residue Ser-426 is modified to Phosphoserine; by PLK1. Ser-468 is subject to Phosphoserine. A Phosphothreonine; by CDK1 modification is found at Thr-550. Ser-637 is modified (phosphoserine; by PLK1).

As to quaternary structure, interacts with FAM29A. Interacts with HSPA1A and HSPA1B. Interacts with gamma-tubulin in a HSPA1A/B-dependent manner. Post-translationally, during mitosis, prior phosphorylation on Thr-550 by CDK1 promotes subsequent phosphorylation by PLK1 on Ser-397, Ser-426 and Ser-637. Phosphorylated NEDD1 can interact with gamma-tubulin for targeting the gamma-tubulin ring complex (gTuRC) to the centrosome, an important step for spindle formation.

The protein localises to the cytoplasm. It is found in the cytoskeleton. The protein resides in the microtubule organizing center. It localises to the centrosome. Its function is as follows. Required for mitosis progression. Promotes the nucleation of microtubules from the spindle. May play an important role during the embryonic development and differentiation of the central nervous system. This Mus musculus (Mouse) protein is Protein NEDD1 (Nedd1).